A 105-amino-acid chain; its full sequence is Nucleoid-associated protein MXAN_1931 (105 aa).

It belongs to the YbaB/EbfC family. Homodimer.

It is found in the cytoplasm. Its subcellular location is the nucleoid. In terms of biological role, binds to DNA and alters its conformation. May be involved in regulation of gene expression, nucleoid organization and DNA protection. This Myxococcus xanthus (strain DK1622) protein is Nucleoid-associated protein MXAN_1931.